A 100-amino-acid polypeptide reads, in one-letter code: HssA/B-like protein 37 (100 aa).

2 disordered regions span residues 1–29 and 67–100; these read MTLF…SGTS and RSRG…CCGI. Residues 71 to 93 show a composition bias toward gly residues; sequence SCGGNRGNGNGNGGMGGGNGSCC.

The protein belongs to the hssA/B family.

The sequence is that of HssA/B-like protein 37 (hssl37) from Dictyostelium discoideum (Social amoeba).